The following is a 467-amino-acid chain: L-seryl-tRNA(Sec) selenium transferase (467 aa).

Lys298 carries the N6-(pyridoxal phosphate)lysine modification.

The protein belongs to the SelA family. Pyridoxal 5'-phosphate is required as a cofactor.

It is found in the cytoplasm. It catalyses the reaction L-seryl-tRNA(Sec) + selenophosphate + H(+) = L-selenocysteinyl-tRNA(Sec) + phosphate. It participates in aminoacyl-tRNA biosynthesis; selenocysteinyl-tRNA(Sec) biosynthesis; selenocysteinyl-tRNA(Sec) from L-seryl-tRNA(Sec) (bacterial route): step 1/1. In terms of biological role, converts seryl-tRNA(Sec) to selenocysteinyl-tRNA(Sec) required for selenoprotein biosynthesis. This is L-seryl-tRNA(Sec) selenium transferase from Alkaliphilus metalliredigens (strain QYMF).